Consider the following 91-residue polypeptide: Small ribosomal subunit protein uS19 (91 aa).

This sequence belongs to the universal ribosomal protein uS19 family.

Its function is as follows. Protein S19 forms a complex with S13 that binds strongly to the 16S ribosomal RNA. This chain is Small ribosomal subunit protein uS19, found in Methylibium petroleiphilum (strain ATCC BAA-1232 / LMG 22953 / PM1).